Here is a 625-residue protein sequence, read N- to C-terminus: Serine/threonine-protein kinase PknB (625 aa).

Topologically, residues 1-331 are cytoplasmic; that stretch reads MTTPQHLSDR…KQRSTSVARW (331 aa). Residues 11-274 form the Protein kinase domain; sequence YELGEILGFG…TAAEMRADLI (264 aa). ATP is bound by residues 17-25, Lys40, and 93-95; these read LGFGGMSEV and EYV. The active-site Proton acceptor is Asp138. ATP-binding positions include 140-143 and Asp156; that span reads KPAN. Residues Asn143 and Asp156 each coordinate Mg(2+). Position 169 is a phosphoserine; by autocatalysis (Ser169). Phosphothreonine; by autocatalysis is present on residues Thr171, Thr173, and Thr294. Ser295 carries the phosphoserine; by autocatalysis modification. The interval 302-321 is disordered; that stretch reads ADRAGAATQDMPVPRPAGYS. Thr309 bears the Phosphothreonine; by autocatalysis mark. The chain crosses the membrane as a helical span at residues 332–352; it reads LIAVAVLAVLTVVVTVAINMV. Topologically, residues 353–625 are extracellular; sequence GGNPRNVQVP…DAKITLSFAA (273 aa). PASTA domains follow at residues 355–421, 422–489, 490–556, and 557–625; these read NPRN…NVST, GPEQ…VVGA, GPED…RVSK, and GNQF…SFAA. A disordered region spans residues 591–612; that stretch reads DVRDSGQRTNAVVTQSPSAGTP. Polar residues predominate over residues 597–611; it reads QRTNAVVTQSPSAGT.

It belongs to the protein kinase superfamily. Ser/Thr protein kinase family. As to quaternary structure, homodimer. Post-translationally, autophosphorylated. Dephosphorylated by PstP.

It localises to the cell membrane. The enzyme catalyses L-seryl-[protein] + ATP = O-phospho-L-seryl-[protein] + ADP + H(+). It carries out the reaction L-threonyl-[protein] + ATP = O-phospho-L-threonyl-[protein] + ADP + H(+). By K-252a. Its function is as follows. Protein kinase that regulates many aspects of mycobacterial physiology. Is a key component of a signal transduction pathway that regulates cell growth, cell shape and cell division via phosphorylation of target proteins. Probably phosphorylates RseA. This is Serine/threonine-protein kinase PknB (pknB) from Mycolicibacterium smegmatis (strain ATCC 700084 / mc(2)155) (Mycobacterium smegmatis).